An 834-amino-acid chain; its full sequence is Translation factor GUF1 homolog, mitochondrial (834 aa).

A mitochondrion-targeting transit peptide spans 1–66 (MKLCGVRGSG…RPLLAEPRRY (66 aa)). In terms of domain architecture, tr-type G spans 129 to 314 (ACIRNVSVVA…QIIDKVPPPR (186 aa)). Residues 138 to 145 (AHVDHGKT), 205 to 209 (DTPGH), and 259 to 262 (TKMD) each bind GTP. Residues 475–507 (ATGPPETASRTKPATAAETASSDDASGSSGSSV) are disordered. Positions 488 to 507 (ATAAETASSDDASGSSGSSV) are enriched in low complexity.

It belongs to the TRAFAC class translation factor GTPase superfamily. Classic translation factor GTPase family. LepA subfamily.

The protein resides in the mitochondrion inner membrane. The enzyme catalyses GTP + H2O = GDP + phosphate + H(+). In terms of biological role, promotes mitochondrial protein synthesis. May act as a fidelity factor of the translation reaction, by catalyzing a one-codon backward translocation of tRNAs on improperly translocated ribosomes. Binds to mitochondrial ribosomes in a GTP-dependent manner. The protein is Translation factor GUF1 homolog, mitochondrial of Leishmania major.